An 87-amino-acid polypeptide reads, in one-letter code: MAKGQSLQDPFLNTLRRERIPVSIYLVNGIKLQGYIESFDQFVILLKNSISQMIYKHAISTVVPNHTNNQEHNQSQYNNNNACISKP.

One can recognise a Sm domain in the interval 9-68; sequence DPFLNTLRRERIPVSIYLVNGIKLQGYIESFDQFVILLKNSISQMIYKHAISTVVPNHTN. A disordered region spans residues 66–87; the sequence is HTNNQEHNQSQYNNNNACISKP.

It belongs to the Hfq family. Homohexamer.

Its function is as follows. RNA chaperone that binds small regulatory RNA (sRNAs) and mRNAs to facilitate mRNA translational regulation in response to envelope stress, environmental stress and changes in metabolite concentrations. Also binds with high specificity to tRNAs. The polypeptide is RNA-binding protein Hfq (Wigglesworthia glossinidia brevipalpis).